Reading from the N-terminus, the 1390-residue chain is DNA-directed RNA polymerase subunit beta (1390 aa).

Positions 556–576 (KLADQDAENDPDSDLGTKSSN) are disordered.

The protein belongs to the RNA polymerase beta chain family. In terms of assembly, the RNAP catalytic core consists of 2 alpha, 1 beta, 1 beta' and 1 omega subunit. When a sigma factor is associated with the core the holoenzyme is formed, which can initiate transcription.

The catalysed reaction is RNA(n) + a ribonucleoside 5'-triphosphate = RNA(n+1) + diphosphate. In terms of biological role, DNA-dependent RNA polymerase catalyzes the transcription of DNA into RNA using the four ribonucleoside triphosphates as substrates. The protein is DNA-directed RNA polymerase subunit beta of Mycoplasmoides gallisepticum (strain R(low / passage 15 / clone 2)) (Mycoplasma gallisepticum).